Consider the following 164-residue polypeptide: Transcription elongation factor GreA (164 aa).

Residues 50–76 (YHAAREEQGQQEARIRQLQELLNNAKV) adopt a coiled-coil conformation.

The protein belongs to the GreA/GreB family.

Its function is as follows. Necessary for efficient RNA polymerase transcription elongation past template-encoded arresting sites. The arresting sites in DNA have the property of trapping a certain fraction of elongating RNA polymerases that pass through, resulting in locked ternary complexes. Cleavage of the nascent transcript by cleavage factors such as GreA or GreB allows the resumption of elongation from the new 3'terminus. GreA releases sequences of 2 to 3 nucleotides. The protein is Transcription elongation factor GreA of Mycobacteroides abscessus (strain ATCC 19977 / DSM 44196 / CCUG 20993 / CIP 104536 / JCM 13569 / NCTC 13031 / TMC 1543 / L948) (Mycobacterium abscessus).